Consider the following 254-residue polypeptide: Anamorsin homolog (254 aa).

The N-terminal SAM-like domain stretch occupies residues valine 4–leucine 132. Residues leucine 132–valine 167 are linker. Cysteine 177, cysteine 186, cysteine 189, and cysteine 191 together coordinate [2Fe-2S] cluster. The tract at residues cysteine 177–cysteine 191 is fe-S binding site A. [4Fe-4S] cluster is bound by residues cysteine 215, cysteine 218, cysteine 226, and cysteine 229. Short sequence motifs (cx2C motif) lie at residues cysteine 215–cysteine 218 and cysteine 226–cysteine 229. The segment at cysteine 215 to cysteine 229 is fe-S binding site B.

The protein belongs to the anamorsin family. In terms of assembly, monomer. It depends on [2Fe-2S] cluster as a cofactor. [4Fe-4S] cluster serves as cofactor.

The protein localises to the cytoplasm. It localises to the mitochondrion intermembrane space. Component of the cytosolic iron-sulfur (Fe-S) protein assembly (CIA) machinery. Required for the maturation of extramitochondrial Fe-S proteins. Part of an electron transfer chain functioning in an early step of cytosolic Fe-S biogenesis, facilitating the de novo assembly of a [4Fe-4S] cluster on the cytosolic Fe-S scaffold complex. Electrons are transferred from NADPH via a FAD- and FMN-containing diflavin oxidoreductase. Together with the diflavin oxidoreductase, also required for the assembly of the diferric tyrosyl radical cofactor of ribonucleotide reductase (RNR), probably by providing electrons for reduction during radical cofactor maturation in the catalytic small subunit. This Aedes aegypti (Yellowfever mosquito) protein is Anamorsin homolog.